Reading from the N-terminus, the 346-residue chain is S-adenosylmethionine:tRNA ribosyltransferase-isomerase (346 aa).

It belongs to the QueA family. Monomer.

Its subcellular location is the cytoplasm. It carries out the reaction 7-aminomethyl-7-carbaguanosine(34) in tRNA + S-adenosyl-L-methionine = epoxyqueuosine(34) in tRNA + adenine + L-methionine + 2 H(+). The protein operates within tRNA modification; tRNA-queuosine biosynthesis. In terms of biological role, transfers and isomerizes the ribose moiety from AdoMet to the 7-aminomethyl group of 7-deazaguanine (preQ1-tRNA) to give epoxyqueuosine (oQ-tRNA). This is S-adenosylmethionine:tRNA ribosyltransferase-isomerase from Shewanella denitrificans (strain OS217 / ATCC BAA-1090 / DSM 15013).